A 274-amino-acid chain; its full sequence is Type II restriction enzyme HgiEI (274 aa).

Belongs to the TdeIII type II restriction endonuclease family.

It carries out the reaction Endonucleolytic cleavage of DNA to give specific double-stranded fragments with terminal 5'-phosphates.. Its function is as follows. A P subtype restriction enzyme that recognizes the double-stranded sequence 5'-GGWCC-3' and cleaves after G-1. This system is more active than isoschizomeric RM.HgiBI. This chain is Type II restriction enzyme HgiEI, found in Herpetosiphon aurantiacus (Herpetosiphon giganteus).